The sequence spans 128 residues: Iron-sulfur cluster insertion protein ErpA (128 aa).

3 residues coordinate iron-sulfur cluster: C56, C120, and C122.

This sequence belongs to the HesB/IscA family. In terms of assembly, homodimer. The cofactor is iron-sulfur cluster.

In terms of biological role, required for insertion of 4Fe-4S clusters for at least IspG. The protein is Iron-sulfur cluster insertion protein ErpA of Xylella fastidiosa (strain M23).